The sequence spans 172 residues: uncharacterized protein (172 aa).

A helical membrane pass occupies residues 109–129 (MLLLYLYYNLLLLTASTPLTF).

It is found in the membrane. This is an uncharacterized protein from Saccharomyces cerevisiae (strain ATCC 204508 / S288c) (Baker's yeast).